Reading from the N-terminus, the 933-residue chain is uncharacterized protein (933 aa).

The span at 1 to 28 shows a compositional bias: polar residues; it reads MNGNLPHIQIQSPKNSLDHLNNGRQATH. 3 disordered regions span residues 1–135, 173–194, and 252–275; these read MNGN…GESD, MDNE…NAAD, and ATDF…ADAQ. The span at 29-47 shows a compositional bias: basic and acidic residues; sequence NFEHGKPGDREEANGHADA. A compositionally biased stretch (low complexity) spans 49–59; that stretch reads SSSGRSRYLSS. 2 stretches are compositionally biased toward polar residues: residues 87 to 101 and 108 to 135; these read TLSF…SNTH and NRSS…GESD. Residues 173–182 show a composition bias toward acidic residues; sequence MDNESSEEER. Positions 264-275 are enriched in polar residues; that stretch reads EPSSSRHTADAQ. WD repeat units lie at residues 314-353, 385-423, 425-465, 467-506, 517-563, 568-607, 617-657, and 665-710; these read SSNN…HARS, GHTA…CLCC, EHSD…VSFW, ELPE…FRTQ, AKGS…LELK, ANAQ…MHKT, ASVR…SVIS, and PSLR…AARK. Serine 722 carries the phosphoserine modification. Positions 756-796 are disordered; the sequence is NASQITNNENNGNDDIKKGDEPEEEHVGLRKNSTQEKNANL. Positions 757-768 are enriched in polar residues; it reads ASQITNNENNGN. Residues 769-783 are compositionally biased toward basic and acidic residues; that stretch reads DDIKKGDEPEEEHVG.

It is found in the endoplasmic reticulum. The protein resides in the nucleus. This is an uncharacterized protein from Schizosaccharomyces pombe (strain 972 / ATCC 24843) (Fission yeast).